The sequence spans 563 residues: Arylsulfatase K (563 aa).

The first 17 residues, 1-17, serve as a signal peptide directing secretion; the sequence is MLLLLVSVIVALALVAP. Asp40 and Cys80 together coordinate Ca(2+). Cys80 serves as the catalytic Nucleophile. Cys80 carries the post-translational modification 3-oxoalanine (Cys). Asn108 is a glycosylation site (N-linked (GlcNAc...) asparagine). Lys128 provides a ligand contact to substrate. A glycan (N-linked (GlcNAc...) asparagine) is linked at Asn191. His249 contacts substrate. N-linked (GlcNAc...) asparagine glycosylation is present at Asn260. Residues Asp311 and His312 each contribute to the Ca(2+) site. 3 N-linked (GlcNAc...) asparagine glycosylation sites follow: Asn373, Asn411, and Asn496.

Belongs to the sulfatase family. Ca(2+) is required as a cofactor. The conversion to 3-oxoalanine (also known as C-formylglycine, FGly), of a serine or cysteine residue in prokaryotes and of a cysteine residue in eukaryotes, is critical for catalytic activity. Post-translationally, the 75-kDa precursor undergoes proteolytic processing to yield a 23 kDa form. In terms of processing, N-glycosylated with both high mannose and complex type sugars.

It localises to the secreted. The protein localises to the lysosome. It carries out the reaction an aryl sulfate + H2O = a phenol + sulfate + H(+). It catalyses the reaction Hydrolysis of the 2-sulfate groups of the 2-O-sulfo-D-glucuronate residues of chondroitin sulfate, heparin and heparitin sulfate.. In terms of biological role, catalyzes the hydrolysis of pseudosubstrates such as p-nitrocatechol sulfate and p-nitrophenyl sulfate. Catalyzes the hydrolysis of the 2-sulfate groups of the 2-O-sulfo-D-glucuronate residues of chondroitin sulfate, heparin and heparitin sulfate. Acts selectively on 2-sulfoglucuronate and lacks activity against 2-sulfoiduronate. In Rattus norvegicus (Rat), this protein is Arylsulfatase K (Arsk).